Consider the following 209-residue polypeptide: Uracil phosphoribosyltransferase (209 aa).

Residues Arg-79, Arg-104, and 131-139 contribute to the 5-phospho-alpha-D-ribose 1-diphosphate site; that span reads DPMLATGGS. Residues Val-194 and 199–201 each bind uracil; that span reads GDA. Asp-200 serves as a coordination point for 5-phospho-alpha-D-ribose 1-diphosphate.

Belongs to the UPRTase family. It depends on Mg(2+) as a cofactor.

It catalyses the reaction UMP + diphosphate = 5-phospho-alpha-D-ribose 1-diphosphate + uracil. It participates in pyrimidine metabolism; UMP biosynthesis via salvage pathway; UMP from uracil: step 1/1. With respect to regulation, allosterically activated by GTP. Its function is as follows. Catalyzes the conversion of uracil and 5-phospho-alpha-D-ribose 1-diphosphate (PRPP) to UMP and diphosphate. The sequence is that of Uracil phosphoribosyltransferase from Bacillus mycoides (strain KBAB4) (Bacillus weihenstephanensis).